We begin with the raw amino-acid sequence, 400 residues long: NADH-quinone oxidoreductase subunit D (400 aa).

The protein belongs to the complex I 49 kDa subunit family. In terms of assembly, NDH-1 is composed of 14 different subunits. Subunits NuoB, C, D, E, F, and G constitute the peripheral sector of the complex.

The protein resides in the cell inner membrane. The enzyme catalyses a quinone + NADH + 5 H(+)(in) = a quinol + NAD(+) + 4 H(+)(out). Functionally, NDH-1 shuttles electrons from NADH, via FMN and iron-sulfur (Fe-S) centers, to quinones in the respiratory chain. The immediate electron acceptor for the enzyme in this species is believed to be a menaquinone. Couples the redox reaction to proton translocation (for every two electrons transferred, four hydrogen ions are translocated across the cytoplasmic membrane), and thus conserves the redox energy in a proton gradient. The polypeptide is NADH-quinone oxidoreductase subunit D (Chlorobium chlorochromatii (strain CaD3)).